Consider the following 122-residue polypeptide: NADPH-dependent 7-cyano-7-deazaguanine reductase (122 aa).

Residue cysteine 34 is the Thioimide intermediate of the active site. Catalysis depends on aspartate 41, which acts as the Proton donor. Residues 56–58 and 75–76 each bind substrate; these read VEL and HE.

It belongs to the GTP cyclohydrolase I family. QueF type 1 subfamily.

It localises to the cytoplasm. The enzyme catalyses 7-aminomethyl-7-carbaguanine + 2 NADP(+) = 7-cyano-7-deazaguanine + 2 NADPH + 3 H(+). It functions in the pathway tRNA modification; tRNA-queuosine biosynthesis. Its function is as follows. Catalyzes the NADPH-dependent reduction of 7-cyano-7-deazaguanine (preQ0) to 7-aminomethyl-7-deazaguanine (preQ1). The protein is NADPH-dependent 7-cyano-7-deazaguanine reductase of Anaeromyxobacter dehalogenans (strain 2CP-1 / ATCC BAA-258).